Here is a 78-residue protein sequence, read N- to C-terminus: Conotoxin Cl11.1 (78 aa).

Residues 1–19 (MKLALTFLLILMILPLTTG) form the signal peptide. A propeptide spanning residues 20–33 (GKKSDNQALKRLGA) is cleaved from the precursor. 4 disulfides stabilise this stretch: cysteine 47/cysteine 61, cysteine 54/cysteine 66, cysteine 60/cysteine 70, and cysteine 65/cysteine 77.

This sequence belongs to the conotoxin I1 superfamily. In terms of tissue distribution, expressed by the venom duct.

The protein localises to the secreted. The polypeptide is Conotoxin Cl11.1 (Californiconus californicus (California cone)).